The following is a 193-amino-acid chain: Major structural subunit of bundle-forming pilus (193 aa).

The propeptide at 1–13 (MVSKIMNKKYEKG) is leader sequence. N-methylleucine is present on leucine 14. A helical membrane pass occupies residues 14–35 (LSLIESAMVLALAATVTAGVMF). Residues cysteine 129 and cysteine 179 are joined by a disulfide bond.

It belongs to the N-Me-Phe pilin family. 10 to 100 laterally aligned filaments or bundle-forming pili coalesce into rope-like bundles. These form linkages between the bacteria within the enteropathogenic E.coli (EPEC) microcolonies that are attached to epithelial cells.

The protein resides in the fimbrium. Its subcellular location is the membrane. Major component of type IV bundle-forming pili (BFP) that plays a role in adherence to host cells and virulence. This Escherichia coli O127:H6 (strain E2348/69 / EPEC) protein is Major structural subunit of bundle-forming pilus (bfpA).